The primary structure comprises 664 residues: DNA topoisomerase 4 subunit B (664 aa).

ATP is bound by residues Tyr-7, Asn-47, Asp-74, 114 to 120 (GLHGVGA), and Lys-341. Positions 386-418 (REAARKAREDARSGKKNKRKDTLLSGKLTPAQS) are disordered. Over residues 387-398 (EAARKAREDARS) the composition is skewed to basic and acidic residues. Residues 424–538 (NELYLVEGDS…AGRVFIALPP (115 aa)) form the Toprim domain. Glu-430, Asp-503, and Asp-505 together coordinate Mg(2+).

This sequence belongs to the type II topoisomerase family. ParE type 2 subfamily. In terms of assembly, heterotetramer composed of ParC and ParE. It depends on Mg(2+) as a cofactor. Requires Mn(2+) as cofactor. The cofactor is Ca(2+).

The catalysed reaction is ATP-dependent breakage, passage and rejoining of double-stranded DNA.. In terms of biological role, topoisomerase IV is essential for chromosome segregation. It relaxes supercoiled DNA. Performs the decatenation events required during the replication of a circular DNA molecule. This Staphylococcus epidermidis (strain ATCC 35984 / DSM 28319 / BCRC 17069 / CCUG 31568 / BM 3577 / RP62A) protein is DNA topoisomerase 4 subunit B.